The sequence spans 724 residues: Acyl-coenzyme A oxidase 2 (724 aa).

Residues M1–P23 form a disordered region. The segment covering L7–T21 has biased composition (basic and acidic residues).

The protein belongs to the acyl-CoA oxidase family. FAD serves as cofactor.

Its subcellular location is the peroxisome. The catalysed reaction is a 2,3-saturated acyl-CoA + O2 = a (2E)-enoyl-CoA + H2O2. It participates in lipid metabolism; peroxisomal fatty acid beta-oxidation. This Candida maltosa (Yeast) protein is Acyl-coenzyme A oxidase 2 (POX2).